Consider the following 351-residue polypeptide: Nicotinate-nucleotide--dimethylbenzimidazole phosphoribosyltransferase (351 aa).

E317 acts as the Proton acceptor in catalysis.

This sequence belongs to the CobT family.

It catalyses the reaction 5,6-dimethylbenzimidazole + nicotinate beta-D-ribonucleotide = alpha-ribazole 5'-phosphate + nicotinate + H(+). It participates in nucleoside biosynthesis; alpha-ribazole biosynthesis; alpha-ribazole from 5,6-dimethylbenzimidazole: step 1/2. Catalyzes the synthesis of alpha-ribazole-5'-phosphate from nicotinate mononucleotide (NAMN) and 5,6-dimethylbenzimidazole (DMB). The polypeptide is Nicotinate-nucleotide--dimethylbenzimidazole phosphoribosyltransferase (Pseudomonas putida (strain W619)).